The following is a 324-amino-acid chain: Zinc finger C2HC domain-containing protein 1A (324 aa).

The C2HC/C3H-type 1 zinc-finger motif lies at 15–44 (DLLPCKICGRTFFPLALKKHGPICQKTATK). Positions 19, 22, 34, and 38 each coordinate Zn(2+). The tract at residues 43-83 (TKKRKTFDSSRQRAEGTDIPTVKPLKPRPEPPKKPSNWRRK) is disordered. A compositionally biased stretch (basic and acidic residues) spans 48–58 (TFDSSRQRAEG). The C2HC/C3H-type 2 zinc-finger motif lies at 118 to 147 (DYIQCPYCQRRFNENAADRHINFCKEQAAR). Residues Cys122, Cys125, His137, and Cys141 each coordinate Zn(2+). Residues 149–225 (SNKGKFSTDS…NKPQTLSPSH (77 aa)) are disordered. Over residues 176-187 (SNPPGIPSSGSS) the composition is skewed to low complexity. Polar residues-rich tracts occupy residues 188–198 (RLPQPSTTSKT) and 206–223 (KASS…TLSP). Ser222 carries the post-translational modification Phosphoserine. The residue at position 243 (Thr243) is a Phosphothreonine. The residue at position 291 (Ser291) is a Phosphoserine.

It belongs to the ZC2HC1 family. Requires Zn(2+) as cofactor.

The chain is Zinc finger C2HC domain-containing protein 1A (Zc2hc1a) from Mus musculus (Mouse).